The primary structure comprises 138 residues: Small ribosomal subunit protein uS11c (138 aa).

The segment at 1–22 (MAKSIPKTGSRKNVRIGSRNQT) is disordered.

Belongs to the universal ribosomal protein uS11 family. In terms of assembly, part of the 30S ribosomal subunit.

Its subcellular location is the plastid. The protein resides in the chloroplast. This is Small ribosomal subunit protein uS11c from Phaseolus angularis (Azuki bean).